Reading from the N-terminus, the 150-residue chain is Arginine repressor (150 aa).

Belongs to the ArgR family.

The protein resides in the cytoplasm. Its pathway is amino-acid biosynthesis; L-arginine biosynthesis [regulation]. Regulates arginine biosynthesis genes. The sequence is that of Arginine repressor from Staphylococcus aureus (strain Mu3 / ATCC 700698).